The chain runs to 1423 residues: Protein phosphatase Slingshot homolog 2 (1423 aa).

Disordered regions lie at residues 1-37 (MALVTVQRSPTPSTTSSPCASEADSGEEECRSQPRSI) and 51-70 (LPRGNGSSTPRVSHRRNKHA). Residues 9 to 18 (SPTPSTTSSP) show a composition bias toward low complexity. Residues serine 17, serine 25, and serine 36 each carry the phosphoserine modification. Positions 248 to 303 (ERTERLIKTKLREIMMQKDLENITSKEIRTELEMQMVCNLREFKEFIDNEMIVILG) constitute a DEK-C domain. A Tyrosine-protein phosphatase domain is found at 307–448 (SPTQIFEHVF…LEEYQGILLA (142 aa)). Residue cysteine 392 is the Phosphocysteine intermediate of the active site. Serine 461, serine 487, serine 534, serine 631, and serine 633 each carry phosphoserine. Disordered regions lie at residues 698-725 (EMAADDQRSSSLSNTPHASEESSVDEDQ), 833-858 (HSSTADLEEEEPVEGEHDWGPGMHSG), 878-950 (RQEQ…HCER), 967-991 (APQDCLGSDSRSKKQEGDLKKQRAV), 1021-1042 (SLGHTEPGGEATPSKEGEKQGL), 1074-1105 (PQVLPLPHSSSECDRPADPNPMLSSPQDKGDC), and 1207-1226 (PEACRIPHSSSSENIRDLSH). Over residues 884–904 (HGTASAGPTLSNRKNSKNDSS) the composition is skewed to polar residues. Composition is skewed to basic and acidic residues over residues 910-932 (PKWKSDETTPEHSFFLKEAEPSK), 976-987 (SRSKKQEGDLKK), and 1033-1042 (PSKEGEKQGL). Serine 1217 carries the post-translational modification Phosphoserine. Threonine 1422 bears the Phosphothreonine mark.

The protein belongs to the protein-tyrosine phosphatase family. In terms of assembly, interacts with filamentous actin. Expressed in brain, heart, liver, skeletal muscle, testis and thymus. Also expressed at lower levels in kidney, small intestine and spleen. Within testicular seminiferous tubules expressed in germ cells and spermatocytes, where it has a cytoplasmic localization, and round spermatids, where it concentrates in the acrosomal region next to the nucleus.

The protein resides in the cytoplasm. It localises to the cytoskeleton. The protein localises to the cell junction. Its subcellular location is the focal adhesion. It is found in the cytoplasmic vesicle. The protein resides in the secretory vesicle. It localises to the acrosome. The enzyme catalyses O-phospho-L-tyrosyl-[protein] + H2O = L-tyrosyl-[protein] + phosphate. It catalyses the reaction O-phospho-L-seryl-[protein] + H2O = L-seryl-[protein] + phosphate. It carries out the reaction O-phospho-L-threonyl-[protein] + H2O = L-threonyl-[protein] + phosphate. Protein phosphatase which regulates actin filament dynamics. Dephosphorylates and activates the actin binding/depolymerizing factor cofilin, which subsequently binds to actin filaments and stimulates their disassembly. Inhibitory phosphorylation of cofilin is mediated by LIMK1, which may also be dephosphorylated and inactivated by this protein. Required for spermatogenesis. Involved in acrosome biogenesis, probably by regulating cofilin-mediated actin cytoskeleton remodeling during proacrosomal vesicle fusion and/or Golgi to perinuclear vesicle trafficking. The polypeptide is Protein phosphatase Slingshot homolog 2 (Ssh2) (Mus musculus (Mouse)).